The sequence spans 227 residues: Ion-translocating oxidoreductase complex subunit E (227 aa).

6 consecutive transmembrane segments (helical) span residues 18–38 (ALVQLLGLCPLLAVSATVTNA), 39–59 (LGLGIATILVLVGSNLIVSLV), 69–89 (IPVFVMIIASLVTCVQLLMNA), 93–113 (GLYLSLGIFIPLIVTNCIIIG), 125–145 (LPAVLDGLWMGMGMTAVLVLL), and 182–202 (HFLLAMLPPGAFLGVGFLIAL).

Belongs to the NqrDE/RnfAE family. In terms of assembly, the complex is composed of six subunits: RnfA, RnfB, RnfC, RnfD, RnfE and RnfG.

Its subcellular location is the cell inner membrane. Functionally, part of a membrane-bound complex that couples electron transfer with translocation of ions across the membrane. This is Ion-translocating oxidoreductase complex subunit E from Aliivibrio fischeri (strain ATCC 700601 / ES114) (Vibrio fischeri).